Here is a 159-residue protein sequence, read N- to C-terminus: Globin C, coelomic (159 aa).

An N-acetylglycine modification is found at Gly2. A Globin domain is found at 12 to 158; it reads DLTLAQKKIV…VQAVLLVKHG (147 aa). His74 and His105 together coordinate heme b.

It belongs to the globin family. Monomer.

The protein is Globin C, coelomic of Molpadia arenicola (Sea cucumber).